The chain runs to 318 residues: MNQDTQSANTQQEKKIAYNFNKLQKRLRRNVGNAIADFNMIEDGDKVMVCLSGGKDSYTLLDILLNLKLSAPIHFDIVAVNLDQKQPGFPEHILPEYLESIGVEYKIVEENTYGIVKEKIPEGKTTCSLCSRLRRGILYRTATELGATKIALGHHRDDMLETLFLNMFYGGKLKSMPPKLISDDGKQIVIRPLAYCKEKDIEKYSQAKQFPIIPCNLCGSQPNLQRQVVKEMLQTWDRQYPGRIETMFSAMQNITLSHLCDPSLFDFKGLKRGQVLDGVEGDIAFDKAEIPNQPLIQDEDEQTTDYGENGMIQFKQVQ.

A PP-loop motif motif is present at residues S52–S57. [4Fe-4S] cluster-binding residues include C127, C130, and C218.

This sequence belongs to the TtcA family. In terms of assembly, homodimer. Requires Mg(2+) as cofactor. It depends on [4Fe-4S] cluster as a cofactor.

The protein localises to the cytoplasm. The catalysed reaction is cytidine(32) in tRNA + S-sulfanyl-L-cysteinyl-[cysteine desulfurase] + AH2 + ATP = 2-thiocytidine(32) in tRNA + L-cysteinyl-[cysteine desulfurase] + A + AMP + diphosphate + H(+). It participates in tRNA modification. Catalyzes the ATP-dependent 2-thiolation of cytidine in position 32 of tRNA, to form 2-thiocytidine (s(2)C32). The sulfur atoms are provided by the cysteine/cysteine desulfurase (IscS) system. This is tRNA-cytidine(32) 2-sulfurtransferase from Actinobacillus pleuropneumoniae serotype 5b (strain L20).